Reading from the N-terminus, the 370-residue chain is DNA replication and repair protein RecF (370 aa).

30 to 37 (GENAQGKT) contacts ATP.

It belongs to the RecF family.

Its subcellular location is the cytoplasm. The RecF protein is involved in DNA metabolism; it is required for DNA replication and normal SOS inducibility. RecF binds preferentially to single-stranded, linear DNA. It also seems to bind ATP. The chain is DNA replication and repair protein RecF from Bacillus velezensis (strain DSM 23117 / BGSC 10A6 / LMG 26770 / FZB42) (Bacillus amyloliquefaciens subsp. plantarum).